A 500-amino-acid chain; its full sequence is Glycerol kinase (500 aa).

An ADP-binding site is contributed by T15. 3 residues coordinate ATP: T15, T16, and S17. T15 lines the sn-glycerol 3-phosphate pocket. ADP is bound at residue R19. Sn-glycerol 3-phosphate contacts are provided by R85, E86, Y137, and D245. Glycerol-binding residues include R85, E86, Y137, D245, and Q246. The ADP site is built by T267 and G310. Positions 267, 310, 314, and 411 each coordinate ATP. Residues G411 and N415 each contribute to the ADP site.

The protein belongs to the FGGY kinase family.

The catalysed reaction is glycerol + ATP = sn-glycerol 3-phosphate + ADP + H(+). The protein operates within polyol metabolism; glycerol degradation via glycerol kinase pathway; sn-glycerol 3-phosphate from glycerol: step 1/1. With respect to regulation, inhibited by fructose 1,6-bisphosphate (FBP). In terms of biological role, key enzyme in the regulation of glycerol uptake and metabolism. Catalyzes the phosphorylation of glycerol to yield sn-glycerol 3-phosphate. The sequence is that of Glycerol kinase from Aeromonas hydrophila subsp. hydrophila (strain ATCC 7966 / DSM 30187 / BCRC 13018 / CCUG 14551 / JCM 1027 / KCTC 2358 / NCIMB 9240 / NCTC 8049).